We begin with the raw amino-acid sequence, 102 residues long: Large ribosomal subunit protein bL21 (102 aa).

This sequence belongs to the bacterial ribosomal protein bL21 family. As to quaternary structure, part of the 50S ribosomal subunit. Contacts protein L20.

This protein binds to 23S rRNA in the presence of protein L20. This is Large ribosomal subunit protein bL21 from Lawsonia intracellularis.